A 256-amino-acid chain; its full sequence is BI1-like protein (256 aa).

Helical transmembrane passes span 53-73 (VYGI…VVVL), 85-105 (PGIL…LHIY), 113-133 (LILL…SCAM), 138-158 (IVLQ…AYTF), 167-187 (FSFL…TSFI), 189-209 (MFFP…ALVF), and 228-248 (EYIL…LTIL).

It belongs to the BI1 family.

It is found in the membrane. In Arabidopsis thaliana (Mouse-ear cress), this protein is BI1-like protein.